Reading from the N-terminus, the 646-residue chain is MSLPKKKIGIFAFFLLTVFTITLKTYFSYYVDFSLGVKGLVQNLILLMNPYSLIALVLSVFLFFKGKKAFWFIFIGGFLLTFLLYANVVYFRFFSDFLTFSTLNQAGNVESMGGAVSASFKWYDFVYFIDTIIYLAILIFKRKWLDNRAFSKKFVPVVMATSVALFFLNLAFAETDRPELLTRTFDHKYLVKYLGPYNFTVYDGVKTIENNQQKALASEDDLTKVLNYTKQKRTEPNPEYYGAAKKKNIIKIHLESFQTFLINKKVNGKEVTPFLNKLSSGNQDFTYFPNFFHQTGQGKTSDSEFTMDNSLYGLPQGSAYSLKGDNTYQSLPAILDQKQGYTSNVMHGDYKTFWNRDQVYKHFGIDNFYDATYYDMSDDNIVNLGLKDKPFFKASADYQSKMKKPFYSHLITLTNHYPFTLDEEDASIDKPNTGDSTVDGYIQTAHYLDQALEEYITDLKKKGLYDNSVIMIYGDHYGISENHNNAMEKLLGEKITPAKFTDLNRTGFWLKVPGKSGGVNKEYAGQMDVMPTLLHLVGIDSKNYLMFGSDMFSKQHNNVVPFRNGDFITEDYKYVNGKIYSNKDNELLTEKPKDFDKNKKQVEKDLEMSDSVLNGDLFRFYKNPDFKKVNPGKYEYKSGPKGNEKK.

Residues 1-7 are Cytoplasmic-facing; the sequence is MSLPKKK. A helical membrane pass occupies residues 8 to 28; sequence IGIFAFFLLTVFTITLKTYFS. The Extracellular portion of the chain corresponds to 29–43; the sequence is YYVDFSLGVKGLVQN. Residues 44-64 traverse the membrane as a helical segment; sequence LILLMNPYSLIALVLSVFLFF. The Cytoplasmic portion of the chain corresponds to 65–68; the sequence is KGKK. The helical transmembrane segment at 69–89 threads the bilayer; that stretch reads AFWFIFIGGFLLTFLLYANVV. Residues 90–119 are Extracellular-facing; it reads YFRFFSDFLTFSTLNQAGNVESMGGAVSAS. The chain crosses the membrane as a helical span at residues 120-140; that stretch reads FKWYDFVYFIDTIIYLAILIF. The Cytoplasmic portion of the chain corresponds to 141–153; sequence KRKWLDNRAFSKK. Residues 154–174 traverse the membrane as a helical segment; sequence FVPVVMATSVALFFLNLAFAE. Over 175-646 the chain is Extracellular; it reads TDRPELLTRT…KSGPKGNEKK (472 aa). Mn(2+) contacts are provided by Glu255 and Thr300. The active site involves Thr300. His416 lines the substrate pocket. The Mn(2+) site is built by Asp475 and His476.

It belongs to the LTA synthase family. In terms of processing, proteolytically cleaved.

Its subcellular location is the cell membrane. The protein resides in the secreted. The protein operates within cell wall biogenesis; lipoteichoic acid biosynthesis. Functionally, catalyzes the polymerization of lipoteichoic acid (LTA) polyglycerol phosphate, a reaction that presumably uses phosphatidylglycerol (PG) as substrate. Is required for staphylococcal growth and cell division process. This is Lipoteichoic acid synthase (ltaS) from Staphylococcus epidermidis (strain ATCC 35984 / DSM 28319 / BCRC 17069 / CCUG 31568 / BM 3577 / RP62A).